Reading from the N-terminus, the 445-residue chain is Phosphoglucosamine mutase (445 aa).

Ser102 serves as the catalytic Phosphoserine intermediate. Mg(2+)-binding residues include Ser102, Asp241, Asp243, and Asp245. Ser102 carries the post-translational modification Phosphoserine.

It belongs to the phosphohexose mutase family. Requires Mg(2+) as cofactor. Post-translationally, activated by phosphorylation.

The catalysed reaction is alpha-D-glucosamine 1-phosphate = D-glucosamine 6-phosphate. In terms of biological role, catalyzes the conversion of glucosamine-6-phosphate to glucosamine-1-phosphate. This chain is Phosphoglucosamine mutase, found in Shigella flexneri serotype 5b (strain 8401).